We begin with the raw amino-acid sequence, 314 residues long: Ficolin-2 (314 aa).

The signal sequence occupies residues 1–17 (MALGSAALFVLTLTVHA). Positions 40-96 (GCPGLPGAAGPKGEAGAKGDRGESGLPGIPGKEGPTGPKGNQGEKGIRGEKGDSGPS) constitute a Collagen-like domain. A disordered region spans residues 49 to 101 (GPKGEAGAKGDRGESGLPGIPGKEGPTGPKGNQGEKGIRGEKGDSGPSQSCAT). In terms of domain architecture, Fibrinogen C-terminal spans 97-314 (QSCATGPRTC…KVSEMKVRLI (218 aa)). 2 disulfide bridges follow: Cys-99-Cys-127 and Cys-106-Cys-134. Ca(2+)-binding residues include Asp-250, Asp-252, Ser-254, and Ser-256. Cys-258 and Cys-271 are oxidised to a cystine. N-linked (GlcNAc...) asparagine glycosylation occurs at Asn-301.

The protein belongs to the ficolin lectin family. In terms of assembly, homotrimer. Interacts with elastin. Interacts with MASP1 and MASP2.

The protein localises to the secreted. Its function is as follows. May function in innate immunity through activation of the lectin complement pathway. Calcium-dependent and GlcNAc-binding lectin. This Mus musculus (Mouse) protein is Ficolin-2 (Fcn2).